Reading from the N-terminus, the 1029-residue chain is Protein STABILIZED1 (1029 aa).

The 85-residue stretch at 1–85 (MVFLSIPNGK…VIIHVLLLGG (85 aa)) folds into the Ubiquitin-like domain. A Glycyl lysine isopeptide (Gly-Lys) (interchain with K-? in acceptor proteins) cross-link involves residue G85. The interval 142 to 170 (AAPGVGRGAGKPSEAEAEDDEEAEEKRYD) is disordered. Residues 210 to 243 (DSRRKDRREAKLKEEIEKYRASNPKITEQFADLK) are a coiled coil. 15 HAT repeats span residues 367 to 399 (YDRN…VEEV), 401 to 431 (GKIK…CRLA), 432 to 462 (NPED…KLEH), 463 to 494 (DVEN…LANE), 496 to 524 (DARI…LETY), 526 to 554 (ESKK…LEEA), 639 to 671 (GSIE…LEKS), 673 to 705 (GSRE…EKWL), 707 to 739 (GDVP…LEFE), 741 to 772 (KEPE…VERE), 774 to 806 (GNVE…LEER), 808 to 840 (KHLE…LEEK), 842 to 874 (NGLN…AELR), 876 to 908 (DNKR…MAPR), and 940 to 972 (KKVE…FELQ). Residues 625–658 (KRTWVADADECKKRGSIETARAIYAHALSVFLTK) form a TPR 1 repeat. The TPR 2 repeat unit spans residues 794-827 (FKLWLMLGQLEERFKHLEQARKAYDTGLKHCPHC). Residues 926–959 (PHVTIAVAKLFWQDKKVEKARAWFERAVTVGPDI) form a TPR 3 repeat.

In terms of assembly, component of a pre-mRNA splicing complex. Interacts with ZOP1. Interacts with PRP31. As to expression, ubiquitous.

It localises to the nucleus. The protein localises to the cajal body. Its function is as follows. Pre-mRNA splicing factor required for splicing and for the turnover of unstable transcripts. May be a U5 snRNP-associated protein involved in the formation of U4/U6-U5 tri-snRNP. Involved in responses to abiotic stresses. Involved in microRNAs (miRNAs) biogenesis by functioning in primary miRNAs (pri-miRNAs) splicing. Required for DNA methylation and transcriptional silencing through the RNA-directed DNA methylation (RdDM) pathway. This Arabidopsis thaliana (Mouse-ear cress) protein is Protein STABILIZED1 (STA1).